The following is a 143-amino-acid chain: UPF0201 protein Pars_1985 (143 aa).

This sequence belongs to the UPF0201 family.

This chain is UPF0201 protein Pars_1985, found in Pyrobaculum arsenaticum (strain DSM 13514 / JCM 11321 / PZ6).